Consider the following 239-residue polypeptide: Lectin (239 aa).

N-linked (GlcNAc...) asparagine glycosylation is found at asparagine 17 and asparagine 113.

It belongs to the leguminous lectin family. In terms of assembly, homodimer.

In terms of biological role, galactose and N-acetyllactosamine specific lectin. The protein is Lectin of Erythrina crista-galli (Cockspur coral tree).